The primary structure comprises 221 residues: Ependymin-1 (221 aa).

The N-terminal stretch at 1–21 (MQAFAVAALSIWLCLGATTLA) is a signal peptide. N33, N73, and N97 each carry an N-linked (GlcNAc...) asparagine glycan.

The protein belongs to the ependymin family. Binds calcium through the terminal sialic acids. In terms of tissue distribution, EPDs are synthesized in the meninx and secreted in the cerebrospinal fluid.

Its subcellular location is the secreted. In terms of biological role, may play a role in neural plasticity. May be involved during axon regeneration. The protein is Ependymin-1 (epd1) of Oncorhynchus mykiss (Rainbow trout).